Reading from the N-terminus, the 353-residue chain is Mitochondrial import inner membrane translocase subunit TIM50 (353 aa).

The N-terminal 44 residues, 1 to 44 (MAASAAVFSRLRSGLRLGSRGLCTRLATPPRRAPDQAAEIGSRG), are a transit peptide targeting the mitochondrion. The interval 25–60 (RLATPPRRAPDQAAEIGSRGSTKAQGPQQQPGSEGP) is disordered. Serine 45 is modified (phosphoserine). Topologically, residues 45–65 (STKAQGPQQQPGSEGPSYAKK) are mitochondrial matrix. The span at 49–60 (QGPQQQPGSEGP) shows a compositional bias: low complexity. A helical transmembrane segment spans residues 66 to 86 (VALWLAGLLGAGGTVSVVYIF). Topologically, residues 87–353 (GNNPVDENGA…SRLWPRSKQP (267 aa)) are mitochondrial intermembrane. The FCP1 homology domain occupies 143–286 (YYQPPYTLVL…LDLSAFLKTI (144 aa)). Serine 341 is subject to Phosphoserine.

This sequence belongs to the TIM50 family. In terms of assembly, component of the TIM23 complex at least composed of TIMM23, TIMM17 (TIMM17A or TIMM17B) and TIMM50; within this complex, directly interacts with TIMM23. The complex interacts with the TIMM44 component of the PAM complex and with DNAJC15. As to quaternary structure, interacts with COIL and snRNPs. Widely expressed. Expressed at higher level in brain, kidney and liver (at protein level).

It is found in the mitochondrion inner membrane. The protein localises to the nucleus speckle. In terms of biological role, essential component of the TIM23 complex, a complex that mediates the translocation of transit peptide-containing proteins across the mitochondrial inner membrane. Has some phosphatase activity in vitro; however such activity may not be relevant in vivo. May participate in the release of snRNPs and SMN from the Cajal body. This Homo sapiens (Human) protein is Mitochondrial import inner membrane translocase subunit TIM50 (TIMM50).